The sequence spans 438 residues: sn-glycerol-3-phosphate-binding periplasmic protein UgpB (438 aa).

Positions 1-23 are cleaved as a signal peptide; sequence MKPLRYTASALALGLALMANAQA. Positions 65, 89, 144, 270, 307, 346, and 397 each coordinate sn-glycerol 3-phosphate.

This sequence belongs to the bacterial solute-binding protein 1 family. The complex is composed of two ATP-binding proteins (UgpC), two transmembrane proteins (UgpA and UgpE) and a solute-binding protein (UgpB).

The protein localises to the periplasm. Functionally, part of the ABC transporter complex UgpBAEC involved in sn-glycerol-3-phosphate (G3P) import. Binds G3P. This is sn-glycerol-3-phosphate-binding periplasmic protein UgpB (ugpB) from Escherichia coli O1:K1 / APEC.